Here is a 707-residue protein sequence, read N- to C-terminus: Elongation factor G (707 aa).

One can recognise a tr-type G domain in the interval 8–296 (ERYRNFGIMA…AVVDFLPAPT (289 aa)). GTP-binding positions include 17 to 24 (AHIDAGKT), 94 to 98 (DTPGH), and 148 to 151 (NKMD).

This sequence belongs to the TRAFAC class translation factor GTPase superfamily. Classic translation factor GTPase family. EF-G/EF-2 subfamily.

Its subcellular location is the cytoplasm. Functionally, catalyzes the GTP-dependent ribosomal translocation step during translation elongation. During this step, the ribosome changes from the pre-translocational (PRE) to the post-translocational (POST) state as the newly formed A-site-bound peptidyl-tRNA and P-site-bound deacylated tRNA move to the P and E sites, respectively. Catalyzes the coordinated movement of the two tRNA molecules, the mRNA and conformational changes in the ribosome. This chain is Elongation factor G, found in Paracoccus denitrificans (strain Pd 1222).